The following is a 57-amino-acid chain: Mambaquaretin-1 (57 aa).

One can recognise a BPTI/Kunitz inhibitor domain in the interval 5–55 (CNLPVKPGPCNGFFSAFYYSQKTNKCHSFTYGGCKGNANRFSTIEKCRRTC). 3 disulfide bridges follow: Cys-5–Cys-55, Cys-14–Cys-38, and Cys-30–Cys-51. The tract at residues 15–16 (NG) is important for binding V2R.

It belongs to the venom Kunitz-type family. As to expression, expressed by the venom gland.

The protein localises to the secreted. In terms of biological role, selectively interacts with vasopressin V2 receptor (V2R/AVPR2) and fully inhibits three major signaling pathways of this receptor that are GalphaS protein, the interaction with beta-arrestin and activation of MAP kinase. Inhibits vasopressin binding human V2R in the nanomolar range (Ki=5.02 nM), and also potently inhibits vasopressin-induced cAMP production (IC(50)=94 nM). In vivo, this protein shows an aquaretic effect. Urine output increases and urine osmolality decreases dramatically under treatment with this protein, without differences observed between healthy mice and the pcy mice model of the autosomal-dominant polycystic kidney disease (ADPKD). This protein does not modify electrolyte, protein and urea excretions in the urine samples, but produces a 3-fold decrease of creatinine levels. Intraperitoneal injection of this protein into the pcy mice significantly reduces the number of renal cysts and the total area of cysts. This protein also shows high efficacy in preventing hyponatremia in rat models (induced by DAVP). Is highly visible in mice liver and kidney after intravenous injection. Is rapidly eliminated in the liver, whereas it exhibits slow elimination in the kidney due to the high expression of V2R which acts as a reservoir. In addition, its elimination from blood is rapid. Fluorescent MQ1 probes could also be used for imaging V2R-overexpressing cancer cells; note that these probes label the three renal cancer cell lines CAKI-2, ACHN and A498 that highly express V2R. In vivo, does not show any toxicity on animals, even at highest doses tested, such as prostration, spidy coat, appetite or weight loss. This chain is Mambaquaretin-1, found in Dendroaspis angusticeps (Eastern green mamba).